Reading from the N-terminus, the 830-residue chain is WD repeat-containing protein 75 (830 aa).

WD repeat units follow at residues 4–43 (EENIRVVRCGGSELNFRRAVFSADSKYIFCVSGDFVKVYS), 47–86 (EECVHILHGHRNLVTGIQLNPNNHLQLYSCSLDGTIKLWD), 90–131 (GILI…QLVS), 145–184 (KELSFVLDYINQSPKCIAFGNEGVYVAAVREFYLSVYFFK), 193–231 (LSSSRNKKHAKNNFTCVACHPTEDCIASGHMDGKIRLWR), 237–276 (KKYTYTCLHWHHDMVMDLAFSVTGTSLLSGGRESVLVEWR), 279–318 (TEKNKEFLPRLGATIEHISVSPAGDLFCTSHSDNKIIIIH), 324–362 (SAVIQGLVKDRSIFTGLMIDPRTKALVLNGKPGHLQFYS), and 376–423 (QQEY…KLWM). A Glycyl lysine isopeptide (Lys-Gly) (interchain with G-Cter in SUMO2) cross-link involves residue Lys123. Lys427 is covalently cross-linked (Glycyl lysine isopeptide (Lys-Gly) (interchain with G-Cter in SUMO2)). WD repeat units follow at residues 430–474 (GFIL…KVWI), 487–525 (GWTCDFVGSYHKYQATNCCFSEDGSLLAVSFEEIVTIWD), 529–569 (WELK…CCWN), and 574–611 (ALEWNAKLNVRVMEPDPNSENIAAISQSSVGSDLFVFK). An N6-acetyllysine modification is found at Lys466. Phosphoserine occurs at positions 664 and 672. A Glycyl lysine isopeptide (Lys-Gly) (interchain with G-Cter in SUMO2) cross-link involves residue Lys676. The interval 763 to 806 (SAKEIPEDVDMEEEKESEDSDEENDFTEKVQDTSNTGLGEDIIH) is disordered. A compositionally biased stretch (acidic residues) spans 769–787 (EDVDMEEEKESEDSDEEND). 4 positions are modified to phosphoserine: Ser779, Ser782, Ser796, and Ser811.

In terms of assembly, component of the proposed t-UTP subcomplex of the ribosomal small subunit (SSU) processome. SSU processome is composed of more than 70 proteins and the RNA chaperone small nucleolar RNA (snoRNA) U3.

It is found in the nucleus. It localises to the nucleolus. Its function is as follows. Ribosome biogenesis factor. Part of the small subunit (SSU) processome, first precursor of the small eukaryotic ribosomal subunit. During the assembly of the SSU processome in the nucleolus, many ribosome biogenesis factors, an RNA chaperone and ribosomal proteins associate with the nascent pre-rRNA and work in concert to generate RNA folding, modifications, rearrangements and cleavage as well as targeted degradation of pre-ribosomal RNA by the RNA exosome. Involved in nucleolar processing of pre-18S ribosomal RNA. Required for optimal pre-ribosomal RNA transcription by RNA polymerase I. The sequence is that of WD repeat-containing protein 75 from Homo sapiens (Human).